A 483-amino-acid polypeptide reads, in one-letter code: tRNA-2-methylthio-N(6)-dimethylallyladenosine synthase (483 aa).

An MTTase N-terminal domain is found at 31 to 148 (KKLYIETQGC…LPQMLDQHHA (118 aa)). [4Fe-4S] cluster contacts are provided by C40, C77, C111, C192, C196, and C199. The 233-residue stretch at 178–410 (RVEGFKAFVS…QQVIKQSSIE (233 aa)) folds into the Radical SAM core domain. Residues 413 to 477 (DAMLGKIERV…LNLVYGELLN (65 aa)) enclose the TRAM domain.

Belongs to the methylthiotransferase family. MiaB subfamily. As to quaternary structure, monomer. Requires [4Fe-4S] cluster as cofactor.

The protein localises to the cytoplasm. The enzyme catalyses N(6)-dimethylallyladenosine(37) in tRNA + (sulfur carrier)-SH + AH2 + 2 S-adenosyl-L-methionine = 2-methylsulfanyl-N(6)-dimethylallyladenosine(37) in tRNA + (sulfur carrier)-H + 5'-deoxyadenosine + L-methionine + A + S-adenosyl-L-homocysteine + 2 H(+). In terms of biological role, catalyzes the methylthiolation of N6-(dimethylallyl)adenosine (i(6)A), leading to the formation of 2-methylthio-N6-(dimethylallyl)adenosine (ms(2)i(6)A) at position 37 in tRNAs that read codons beginning with uridine. The polypeptide is tRNA-2-methylthio-N(6)-dimethylallyladenosine synthase (Acinetobacter baumannii (strain ACICU)).